The primary structure comprises 366 residues: UDP-N-acetylglucosamine--N-acetylmuramyl-(pentapeptide) pyrophosphoryl-undecaprenol N-acetylglucosamine transferase (366 aa).

UDP-N-acetyl-alpha-D-glucosamine-binding positions include 17-19, Asn129, Arg169, Ser195, Ile251, 270-275, and Gln296; these read TGG and ALTVSE.

This sequence belongs to the glycosyltransferase 28 family. MurG subfamily.

Its subcellular location is the cell inner membrane. The enzyme catalyses di-trans,octa-cis-undecaprenyl diphospho-N-acetyl-alpha-D-muramoyl-L-alanyl-D-glutamyl-meso-2,6-diaminopimeloyl-D-alanyl-D-alanine + UDP-N-acetyl-alpha-D-glucosamine = di-trans,octa-cis-undecaprenyl diphospho-[N-acetyl-alpha-D-glucosaminyl-(1-&gt;4)]-N-acetyl-alpha-D-muramoyl-L-alanyl-D-glutamyl-meso-2,6-diaminopimeloyl-D-alanyl-D-alanine + UDP + H(+). Its pathway is cell wall biogenesis; peptidoglycan biosynthesis. In terms of biological role, cell wall formation. Catalyzes the transfer of a GlcNAc subunit on undecaprenyl-pyrophosphoryl-MurNAc-pentapeptide (lipid intermediate I) to form undecaprenyl-pyrophosphoryl-MurNAc-(pentapeptide)GlcNAc (lipid intermediate II). This Shewanella denitrificans (strain OS217 / ATCC BAA-1090 / DSM 15013) protein is UDP-N-acetylglucosamine--N-acetylmuramyl-(pentapeptide) pyrophosphoryl-undecaprenol N-acetylglucosamine transferase.